A 191-amino-acid polypeptide reads, in one-letter code: Small ribosomal subunit protein uS5 (191 aa).

Residues 1-20 (MAGERERGGRERSRDREERD) are disordered. An S5 DRBM domain is found at 23–86 (FVDKLVHINR…ESAKRNLTRV (64 aa)).

This sequence belongs to the universal ribosomal protein uS5 family. In terms of assembly, part of the 30S ribosomal subunit. Contacts proteins S4 and S8.

Its function is as follows. With S4 and S12 plays an important role in translational accuracy. Located at the back of the 30S subunit body where it stabilizes the conformation of the head with respect to the body. This is Small ribosomal subunit protein uS5 from Nitrobacter winogradskyi (strain ATCC 25391 / DSM 10237 / CIP 104748 / NCIMB 11846 / Nb-255).